The sequence spans 729 residues: Carbon monoxide dehydrogenase/acetyl-CoA synthase subunit alpha (729 aa).

Positions 506, 509, 518, and 528 each coordinate [4Fe-4S] cluster. C509 provides a ligand contact to Ni(2+). Ni(2+) contacts are provided by C595, G596, and C597.

In terms of assembly, tetramer of two alpha and two beta chains. Ni cation is required as a cofactor. The cofactor is [4Fe-4S] cluster.

It catalyses the reaction Co(I)-[corrinoid Fe-S protein] + acetyl-CoA + H(+) = methyl-Co(III)-[corrinoid Fe-S protein] + CO + CoA. Its function is as follows. The beta subunit generates CO from CO(2), while the alpha subunit (this protein) combines the CO with CoA and a methyl group to form acetyl-CoA. The methyl group, which is incorporated into acetyl-CoA, is transferred to the alpha subunit by a corrinoid iron-sulfur protein. The sequence is that of Carbon monoxide dehydrogenase/acetyl-CoA synthase subunit alpha from Moorella thermoacetica (Clostridium thermoaceticum).